A 46-amino-acid polypeptide reads, in one-letter code: Hellethionin-D (46 aa).

4 disulfide bridges follow: Cys3/Cys40, Cys4/Cys32, Cys12/Cys30, and Cys16/Cys26.

Belongs to the plant thionin (TC 1.C.44) family. 4 C-C subfamily.

The protein localises to the secreted. In terms of biological role, thionins are small plant proteins which are toxic to animal cells. They seem to exert their toxic effect at the level of the cell membrane. Their precise function is not known. This chain is Hellethionin-D, found in Helleborus purpurascens (Purple hellebore).